The primary structure comprises 167 residues: Interferon gamma (167 aa).

A signal peptide spans 1-23; it reads MSYTSYILAFQLCLILGSYGCYC. Gln-24 is modified (pyrrolidone carboxylic acid). Asn-41, Asn-108, and Asn-117 each carry an N-linked (GlcNAc...) asparagine glycan.

Belongs to the type II (or gamma) interferon family. As to quaternary structure, homodimer. Interacts with IFNGR1 (via extracellular domain); this interaction promotes IFNGR1 dimerization. As to expression, released primarily from activated T lymphocytes.

The protein localises to the secreted. Type II interferon produced by immune cells such as T-cells and NK cells that plays crucial roles in antimicrobial, antiviral, and antitumor responses by activating effector immune cells and enhancing antigen presentation. Primarily signals through the JAK-STAT pathway after interaction with its receptor IFNGR1 to affect gene regulation. Upon IFNG binding, IFNGR1 intracellular domain opens out to allow association of downstream signaling components JAK2, JAK1 and STAT1, leading to STAT1 activation, nuclear translocation and transcription of IFNG-regulated genes. Many of the induced genes are transcription factors such as IRF1 that are able to further drive regulation of a next wave of transcription. Plays a role in class I antigen presentation pathway by inducing a replacement of catalytic proteasome subunits with immunoproteasome subunits. In turn, increases the quantity, quality, and repertoire of peptides for class I MHC loading. Increases the efficiency of peptide generation also by inducing the expression of activator PA28 that associates with the proteasome and alters its proteolytic cleavage preference. Up-regulates as well MHC II complexes on the cell surface by promoting expression of several key molecules such as cathepsins B/CTSB, H/CTSH, and L/CTSL. Participates in the regulation of hematopoietic stem cells during development and under homeostatic conditions by affecting their development, quiescence, and differentiation. This Oryctolagus cuniculus (Rabbit) protein is Interferon gamma (IFNG).